The primary structure comprises 345 residues: Dihydroorotate dehydrogenase (quinone) (345 aa).

Residues 65–69 (AGLDK) and T89 contribute to the FMN site. Position 69 (K69) interacts with substrate. 114-118 (NRMGF) serves as a coordination point for substrate. 2 residues coordinate FMN: N142 and N175. A substrate-binding site is contributed by N175. The active-site Nucleophile is the S178. N180 provides a ligand contact to substrate. FMN-binding residues include K220 and T248. 249-250 (NT) is a substrate binding site. Residues G271, G300, and 321 to 322 (YT) contribute to the FMN site.

Belongs to the dihydroorotate dehydrogenase family. Type 2 subfamily. Monomer. It depends on FMN as a cofactor.

It localises to the cell membrane. It carries out the reaction (S)-dihydroorotate + a quinone = orotate + a quinol. It functions in the pathway pyrimidine metabolism; UMP biosynthesis via de novo pathway; orotate from (S)-dihydroorotate (quinone route): step 1/1. Its function is as follows. Catalyzes the conversion of dihydroorotate to orotate with quinone as electron acceptor. The sequence is that of Dihydroorotate dehydrogenase (quinone) from Burkholderia thailandensis (strain ATCC 700388 / DSM 13276 / CCUG 48851 / CIP 106301 / E264).